A 432-amino-acid chain; its full sequence is Glutamate-1-semialdehyde 2,1-aminomutase (432 aa).

At Lys-265 the chain carries N6-(pyridoxal phosphate)lysine.

It belongs to the class-III pyridoxal-phosphate-dependent aminotransferase family. HemL subfamily. In terms of assembly, homodimer. Requires pyridoxal 5'-phosphate as cofactor.

It localises to the cytoplasm. The catalysed reaction is (S)-4-amino-5-oxopentanoate = 5-aminolevulinate. It participates in porphyrin-containing compound metabolism; protoporphyrin-IX biosynthesis; 5-aminolevulinate from L-glutamyl-tRNA(Glu): step 2/2. The polypeptide is Glutamate-1-semialdehyde 2,1-aminomutase (Histophilus somni (strain 129Pt) (Haemophilus somnus)).